The sequence spans 142 residues: Transcriptional regulator MraZ (142 aa).

2 SpoVT-AbrB domains span residues 5–47 and 76–119; these read EYPY…PLPG and ASKA…NPQR.

This sequence belongs to the MraZ family. In terms of assembly, forms oligomers.

It localises to the cytoplasm. The protein resides in the nucleoid. The protein is Transcriptional regulator MraZ of Deinococcus radiodurans (strain ATCC 13939 / DSM 20539 / JCM 16871 / CCUG 27074 / LMG 4051 / NBRC 15346 / NCIMB 9279 / VKM B-1422 / R1).